Consider the following 314-residue polypeptide: DegV domain-containing protein XAC3508 (314 aa).

Residues 3 to 307 form the DegV domain; the sequence is IGIVVDSACD…KGALAVGFAA (305 aa). 2 residues coordinate hexadecanoate: Thr-63 and Ser-96.

May bind long-chain fatty acids, such as palmitate, and may play a role in lipid transport or fatty acid metabolism. In Xanthomonas axonopodis pv. citri (strain 306), this protein is DegV domain-containing protein XAC3508.